Reading from the N-terminus, the 304-residue chain is Acetylglutamate kinase (304 aa).

Substrate is bound by residues 77 to 78 (GG), Arg-99, and Asn-193.

Belongs to the acetylglutamate kinase family. ArgB subfamily.

Its subcellular location is the cytoplasm. The catalysed reaction is N-acetyl-L-glutamate + ATP = N-acetyl-L-glutamyl 5-phosphate + ADP. It participates in amino-acid biosynthesis; L-arginine biosynthesis; N(2)-acetyl-L-ornithine from L-glutamate: step 2/4. In terms of biological role, catalyzes the ATP-dependent phosphorylation of N-acetyl-L-glutamate. In Chlorobium limicola (strain DSM 245 / NBRC 103803 / 6330), this protein is Acetylglutamate kinase.